We begin with the raw amino-acid sequence, 745 residues long: Exocyst complex component 3 (745 aa).

Position 28 is an N6-acetyllysine (Lys28).

The protein belongs to the SEC6 family. The exocyst complex is composed of EXOC1, EXOC2, EXOC3, EXOC4, EXOC5, EXOC6, EXOC7 and EXOC8. Interacts with EXOC3L1. Interacts with BIRC6/bruce. Interacts with MYRIP. Interacts with SLC6A9.

The protein localises to the cytoplasm. Its subcellular location is the perinuclear region. It is found in the cell projection. The protein resides in the growth cone. It localises to the neuron projection. The protein localises to the midbody. Its subcellular location is the golgi apparatus. Component of the exocyst complex involved in the docking of exocytic vesicles with fusion sites on the plasma membrane. In Bos taurus (Bovine), this protein is Exocyst complex component 3 (EXOC3).